Reading from the N-terminus, the 353-residue chain is MSGNSFERSDESNEQSSISIIEYVWIGGNGELRSKTRVLYSSIMTGYKLSDIPVWNYDGSSTNQANGSSSEVFLYPRNIYRCPFRRNVNGVIVICDTYDVNGVPLETNHRHNANIIFEKYQNEKPWYGLEQEYFIFRKDTNQPIGMEYASKQGQYYCSVGSQNAYGRRISDEHMEACLYAGIKISGTNLEVAPGQHEFQIGPVEGIDAADQLWIARFILEKISEHYDRYIVYHPKPLQGDWNGSGCHTNFSTESMRSEGGLTVIMEAVDKLRTKHSEHMKVYGIDNDLRLTGDHETASIDEFSHGIGSRQCSVRIPNDTVKNGYGYFEDRRPAANIDPYQVTSIILQTVCESD.

In terms of domain architecture, GS beta-grasp spans 19-102; it reads SIIEYVWIGG…VICDTYDVNG (84 aa). Residues 109–353 enclose the GS catalytic domain; the sequence is HRHNANIIFE…IILQTVCESD (245 aa).

This sequence belongs to the glutamine synthetase family.

The catalysed reaction is L-glutamate + NH4(+) + ATP = L-glutamine + ADP + phosphate + H(+). This Acanthamoeba polyphaga (Amoeba) protein is Putative glutamine synthetase.